Reading from the N-terminus, the 334-residue chain is DNA-directed RNA polymerase subunit alpha (334 aa).

An alpha N-terminal domain (alpha-NTD) region spans residues 1–234; sequence MQRSVHELLT…QQLAVFVDFD (234 aa). The segment at 248–334 is alpha C-terminal domain (alpha-CTD); the sequence is IDPILLRPVD…LRGDDRVLGG (87 aa).

The protein belongs to the RNA polymerase alpha chain family. As to quaternary structure, homodimer. The RNAP catalytic core consists of 2 alpha, 1 beta, 1 beta' and 1 omega subunit. When a sigma factor is associated with the core the holoenzyme is formed, which can initiate transcription.

It carries out the reaction RNA(n) + a ribonucleoside 5'-triphosphate = RNA(n+1) + diphosphate. Functionally, DNA-dependent RNA polymerase catalyzes the transcription of DNA into RNA using the four ribonucleoside triphosphates as substrates. The chain is DNA-directed RNA polymerase subunit alpha from Marinobacter nauticus (strain ATCC 700491 / DSM 11845 / VT8) (Marinobacter aquaeolei).